The chain runs to 115 residues: Large ribosomal subunit protein bL20 (115 aa).

The protein belongs to the bacterial ribosomal protein bL20 family.

In terms of biological role, binds directly to 23S ribosomal RNA and is necessary for the in vitro assembly process of the 50S ribosomal subunit. It is not involved in the protein synthesizing functions of that subunit. In Chlorobaculum tepidum (strain ATCC 49652 / DSM 12025 / NBRC 103806 / TLS) (Chlorobium tepidum), this protein is Large ribosomal subunit protein bL20.